The sequence spans 66 residues: Large ribosomal subunit protein bL35 (66 aa).

The span at 1 to 16 shows a compositional bias: basic residues; sequence MPKQKTHRASAKRFKR. The tract at residues 1 to 20 is disordered; the sequence is MPKQKTHRASAKRFKRTGSG.

The protein belongs to the bacterial ribosomal protein bL35 family.

The protein is Large ribosomal subunit protein bL35 of Streptococcus uberis (strain ATCC BAA-854 / 0140J).